The following is a 397-amino-acid chain: CCA-adding enzyme (397 aa).

Gly-26 and Arg-29 together coordinate ATP. The CTP site is built by Gly-26 and Arg-29. Positions 39 and 41 each coordinate Mg(2+). Arg-110, Asp-153, Arg-156, Arg-159, and Arg-162 together coordinate ATP. Residues Arg-110, Asp-153, Arg-156, Arg-159, and Arg-162 each coordinate CTP.

It belongs to the tRNA nucleotidyltransferase/poly(A) polymerase family. Bacterial CCA-adding enzyme type 3 subfamily. As to quaternary structure, homodimer. The cofactor is Mg(2+).

The catalysed reaction is a tRNA precursor + 2 CTP + ATP = a tRNA with a 3' CCA end + 3 diphosphate. It carries out the reaction a tRNA with a 3' CCA end + 2 CTP + ATP = a tRNA with a 3' CCACCA end + 3 diphosphate. Its function is as follows. Catalyzes the addition and repair of the essential 3'-terminal CCA sequence in tRNAs without using a nucleic acid template. Adds these three nucleotides in the order of C, C, and A to the tRNA nucleotide-73, using CTP and ATP as substrates and producing inorganic pyrophosphate. tRNA 3'-terminal CCA addition is required both for tRNA processing and repair. Also involved in tRNA surveillance by mediating tandem CCA addition to generate a CCACCA at the 3' terminus of unstable tRNAs. While stable tRNAs receive only 3'-terminal CCA, unstable tRNAs are marked with CCACCA and rapidly degraded. The chain is CCA-adding enzyme from Bacillus cereus (strain G9842).